Consider the following 399-residue polypeptide: Paraneoplastic antigen-like protein 6A (399 aa).

It belongs to the PNMA family. Expressed in the brain.

This is Paraneoplastic antigen-like protein 6A from Homo sapiens (Human).